Consider the following 394-residue polypeptide: Elongation factor Tu 1 (394 aa).

One can recognise a tr-type G domain in the interval 10 to 204 (KPHVNVGTIG…YLDSYIPEPE (195 aa)). The interval 19 to 26 (GHVDHGKT) is G1. 19-26 (GHVDHGKT) is a GTP binding site. Threonine 26 contributes to the Mg(2+) binding site. The tract at residues 60 to 64 (GITIN) is G2. Residues 81–84 (DCPG) form a G3 region. GTP contacts are provided by residues 81–85 (DCPGH) and 136–139 (NKCD). The segment at 136–139 (NKCD) is G4. The segment at 174 to 176 (SAL) is G5.

The protein belongs to the TRAFAC class translation factor GTPase superfamily. Classic translation factor GTPase family. EF-Tu/EF-1A subfamily. In terms of assembly, monomer.

Its subcellular location is the cytoplasm. It carries out the reaction GTP + H2O = GDP + phosphate + H(+). GTP hydrolase that promotes the GTP-dependent binding of aminoacyl-tRNA to the A-site of ribosomes during protein biosynthesis. This is Elongation factor Tu 1 from Yersinia enterocolitica serotype O:8 / biotype 1B (strain NCTC 13174 / 8081).